Here is a 425-residue protein sequence, read N- to C-terminus: Transmembrane protein 184A (425 aa).

Transmembrane regions (helical) follow at residues 51–71, 96–116, 133–153, 189–209, 226–246, 261–281, and 303–323; these read LFLT…TALL, LLFI…LLGG, FVIY…SAIM, TLQF…LQAF, VTLV…LFYF, FLTI…LAIL, and LAAG…SLAL. Positions 375–425 are disordered; sequence QYTQQSTHEAPGPGQGGHPAPSTHPGPASGSGGGKKSRNIEKRMLIPSEDL. The span at 392–402 shows a compositional bias: low complexity; the sequence is HPAPSTHPGPA.

It belongs to the TMEM184 family. Expressed in testis, pancreas, parotid salivary gland and mammary gland (at protein level).

It is found in the cell membrane. The protein localises to the cytoplasm. It localises to the perinuclear region. The protein resides in the cytoplasmic vesicle membrane. Its subcellular location is the early endosome membrane. It is found in the endosome. The protein localises to the cytoplasmic vesicle. It localises to the secretory vesicle membrane. In terms of biological role, acts as a heparin receptor in vascular cells. May be involved in vesicle transport in exocrine cells and Sertoli cells. The protein is Transmembrane protein 184A (Tmem184a) of Mus musculus (Mouse).